A 495-amino-acid chain; its full sequence is Glutamate--tRNA ligase (495 aa).

The 'HIGH' region motif lies at 12–22 (PSPTGHLHIGN). The short motif at 259-263 (KLSKR) is the 'KMSKS' region element. Lys262 contacts ATP.

The protein belongs to the class-I aminoacyl-tRNA synthetase family. Glutamate--tRNA ligase type 1 subfamily. Monomer.

Its subcellular location is the cytoplasm. It carries out the reaction tRNA(Glu) + L-glutamate + ATP = L-glutamyl-tRNA(Glu) + AMP + diphosphate. In terms of biological role, catalyzes the attachment of glutamate to tRNA(Glu) in a two-step reaction: glutamate is first activated by ATP to form Glu-AMP and then transferred to the acceptor end of tRNA(Glu). The chain is Glutamate--tRNA ligase from Ligilactobacillus salivarius (strain UCC118) (Lactobacillus salivarius).